The chain runs to 167 residues: 6,7-dimethyl-8-ribityllumazine synthase (167 aa).

5-amino-6-(D-ribitylamino)uracil contacts are provided by residues Phe26, 60–62, and 89–91; these read AFE and AVI. Residue 94-95 participates in (2S)-2-hydroxy-3-oxobutyl phosphate binding; sequence ET. The active-site Proton donor is His97. A 5-amino-6-(D-ribitylamino)uracil-binding site is contributed by Phe122. Arg136 provides a ligand contact to (2S)-2-hydroxy-3-oxobutyl phosphate.

Belongs to the DMRL synthase family. Forms an icosahedral capsid composed of 60 subunits, arranged as a dodecamer of pentamers.

It catalyses the reaction (2S)-2-hydroxy-3-oxobutyl phosphate + 5-amino-6-(D-ribitylamino)uracil = 6,7-dimethyl-8-(1-D-ribityl)lumazine + phosphate + 2 H2O + H(+). It participates in cofactor biosynthesis; riboflavin biosynthesis; riboflavin from 2-hydroxy-3-oxobutyl phosphate and 5-amino-6-(D-ribitylamino)uracil: step 1/2. Its function is as follows. Catalyzes the formation of 6,7-dimethyl-8-ribityllumazine by condensation of 5-amino-6-(D-ribitylamino)uracil with 3,4-dihydroxy-2-butanone 4-phosphate. This is the penultimate step in the biosynthesis of riboflavin. The chain is 6,7-dimethyl-8-ribityllumazine synthase from Vesicomyosocius okutanii subsp. Calyptogena okutanii (strain HA).